The following is a 201-amino-acid chain: Recombination protein RecR (201 aa).

The C4-type zinc-finger motif lies at 60 to 75 (CSRCGNVDTVDPCIVC). The Toprim domain maps to 83–178 (SVIIVVEDVS…KITRLAHGVP (96 aa)).

It belongs to the RecR family.

Its function is as follows. May play a role in DNA repair. It seems to be involved in an RecBC-independent recombinational process of DNA repair. It may act with RecF and RecO. The protein is Recombination protein RecR of Rhizobium johnstonii (strain DSM 114642 / LMG 32736 / 3841) (Rhizobium leguminosarum bv. viciae).